The following is a 160-amino-acid chain: Anaerobic nitrite reductase AHB1 (160 aa).

The 150-residue stretch at 8–157 (VFTEEQEALV…LVAAIKAEMN (150 aa)) folds into the Globin domain. The short motif at 41-45 (EIAPT) is the Homodimerization element. Heme b-binding residues include Ser51, Lys65, His69, Arg99, Ser103, and His104. The Homodimerization motif lies at 111 to 123 (DEHFEVAKYALLE).

It belongs to the plant globin family. In terms of assembly, homodimer. Heme b is required as a cofactor. In terms of tissue distribution, expressed in roots and rosette leaves.

The protein localises to the cytoplasm. The protein resides in the nucleus. It carries out the reaction Fe(III)-heme b-[protein] + nitric oxide + H2O = Fe(II)-heme b-[protein] + nitrite + 2 H(+). Its function is as follows. Phytoglobin that reduces nitrite to nitric oxide (NO) under anoxic conditions (e.g. during flooding or in waterlogged soil). May not function as an oxygen storage or transport protein. Has an unusually high affinity for O(2) through an hexacoordinate heme iron because of a very low dissociation constant. This Arabidopsis thaliana (Mouse-ear cress) protein is Anaerobic nitrite reductase AHB1.